Here is a 102-residue protein sequence, read N- to C-terminus: Major basic nuclear protein 2 (102 aa).

The segment covering Met1 to Met11 has biased composition (basic residues). The segment at Met1 to Gln43 is disordered. The span at Ala21 to Ala42 shows a compositional bias: low complexity.

The protein localises to the nucleus. The sequence is that of Major basic nuclear protein 2 (HCc2) from Crypthecodinium cohnii (Dinoflagellate).